The chain runs to 302 residues: Probable 2-(5''-triphosphoribosyl)-3'-dephosphocoenzyme-A synthase 1 (302 aa).

This sequence belongs to the CitG/MdcB family.

The enzyme catalyses 3'-dephospho-CoA + ATP = 2'-(5''-triphospho-alpha-D-ribosyl)-3'-dephospho-CoA + adenine. The chain is Probable 2-(5''-triphosphoribosyl)-3'-dephosphocoenzyme-A synthase 1 from Salmonella paratyphi A (strain ATCC 9150 / SARB42).